The sequence spans 252 residues: uncharacterized protein (252 aa).

16 to 40 (LVTGASDGIGREAAMTYARYGATVI) contributes to the NADP(+) binding site. Ser152 lines the substrate pocket. Residue Tyr165 is the Proton acceptor of the active site.

It belongs to the short-chain dehydrogenases/reductases (SDR) family.

This is an uncharacterized protein from Escherichia coli (strain K12).